The sequence spans 246 residues: Dolichol-phosphate mannosyltransferase subunit 1 (246 aa).

GDP-alpha-D-mannose is bound by residues Pro-20, Tyr-22, Glu-24, Val-49, Asp-51, Asp-104, Ala-105, Asp-106, Arg-133, Arg-220, and Lys-226. Residue Asp-106 participates in Mg(2+) binding. Asp-106 contributes to the Mn(2+) binding site.

Belongs to the glycosyltransferase 2 family. As to quaternary structure, component of the dolichol-phosphate mannose (DPM) synthase complex composed of DPMS1, DPMS2 and DPMS3; in the complex interacts directly with DPMS3. Requires Mg(2+) as cofactor. The cofactor is Mn(2+). It depends on Ca(2+) as a cofactor.

It localises to the endoplasmic reticulum membrane. The catalysed reaction is a di-trans,poly-cis-dolichyl phosphate + GDP-alpha-D-mannose = a di-trans,poly-cis-dolichyl beta-D-mannosyl phosphate + GDP. Its pathway is protein modification; protein glycosylation. Transfers mannose from GDP-mannose to dolichol monophosphate to form dolichol phosphate mannose (Dol-P-Man) which is the mannosyl donor in pathways leading to N-glycosylation, glycosyl phosphatidylinositol membrane anchoring, and O-mannosylation of proteins; catalytic subunit of the dolichol-phosphate mannose (DPM) synthase complex. Plays a role in plant development and physiology, sensitivity to ammonium stress and endoplasmic reticulum stress response. This Arabidopsis thaliana (Mouse-ear cress) protein is Dolichol-phosphate mannosyltransferase subunit 1.